The primary structure comprises 854 residues: MATKSTEKHTPMMQQYLRLKSENPDILLFYRMGDFYELFYDDAKRASQLLEISLTKRGSSAGEPIPMAGIPYHAVEGYLAKLVQQGESVAICEQIGDPATSKGPVERKVVRIVTPGTVTDEALLPERFDNLIAAIYHHKGQFGYATLDITSGRFKVSEPNTEEAMLAELQRTAPTELLFSEDFEPVHLLEKRNGNRRRPVWEFELDTAKQQLNNQFGTRDLVGFGVERAEFGLCAAGCLIQYVKDTQRTTLPHIRSIIMDHQDDSVILDAATRRNLEITQNLAGGFNHTLAEILDHTSTAMGSRLLKRWLHQPVRTHDVLNQRLDAIGELKESGLFADIAPQLKNIGDVERILARLALRSARPRDLARLRNALQQLPELSQTTQEFQQNHLLTLAASAQPIDSICELLERAIKENPPVVIRDGGVLADGYNEELDQWRDLANGATQYLEKLEQEERERHDIDTLKVGYNNVHGFYIQISKGQSHKAPAHYVRRQTLKNAERYIIPELKEHEDKVLNSKSKALAIEKRLWEELFDQLLPHLEQLQSMANAISELDVLSNLAERADTLNYCRPVLTKETGINIEGGRHPVVEQVMSDPFIANPIKLNPDRKMLIITGPNMGGKSTYMRQTALIALMAHVGCYVPADSAEIGTLDRIFTRIGASDDLASGRSTFMVEMTETANILHNATKHSLVLMDEIGRGTSTYDGLSLAWASAEWLATKINAMTLFATHYFELTELPNLFTGLANVHLDAVEHGDEIAFMHAVQEGAANKSYGLAVASLAGVPKSVIKKAKQKLQHLESGQVSVPATSTTVKEEHQLSLIPEISEVEEALANVNPDDLTPRQALEELYRLKALL.

615–622 is an ATP binding site; the sequence is GPNMGGKS.

It belongs to the DNA mismatch repair MutS family.

This protein is involved in the repair of mismatches in DNA. It is possible that it carries out the mismatch recognition step. This protein has a weak ATPase activity. The sequence is that of DNA mismatch repair protein MutS from Aliivibrio fischeri (strain MJ11) (Vibrio fischeri).